The sequence spans 810 residues: MPNQGEDCYFFFYSTCTKGDSCPFRHCEAAIGNETVCTLWQEGRCFRQVCRFRHMEIDKKRSEIPCYWENQPTGCQKLNCAFHHNRGRYVDGLFLPPSKTVLPTVPESPEEEVKASQLSVQQNKLSVQSNPSPQLRSVMKVESSENVPSPTHPPVVINAADDDEDDDDQFSEEGDETKTPTLQPTPEVHNGLRVTSVRKPAVNIKQGECLNFGIKTLEEIKSKKMKEKSKKQGEGSSGVSSLLLHPEPVPGPEKENVRTVVRTVTLSTKQGEEPLVRLSLTERLGKRKFSAGGDSDPPLKRSLAQRLGKKVEAPETNIDKTPKKAQVSKSLKERLGMSADPDNEDATDKVNKVGEIHVKTLEEILLERASQKRGELQTKLKTEGPSKTDDSTSGARSSSTIRIKTFSEVLAEKKHRQQEAERQKSKKDTTCIKLKIDSEIKKTVVLPPIVASRGQSEEPAGKTKSMQEVHIKTLEEIKLEKALRVQQSSESSTSSPSQHEATPGARRLLRITKRTGMKEEKNLQEGNEVDSQSSIRTEAKEASGETTGVDITKIQVKRCETMREKHMQKQQEREKSVLTPLRGDVASCNTQVAEKPVLTAVPGITRHLTKRLPTKSSQKVEVETSGIGDSLLNVKCAAQTLEKRGKAKPKVNVKPSVVKVVSSPKLAPKRKAVEMHAAVIAAVKPLSSSSVLQEPPAKKAAVAVVPLVSEDKSVTVPEAENPRDSLVLPPTQSSSDSSPPEVSGPSSSQMSMKTRRLSSASTGKPPLSVEDDFEKLIWEISGGKLEAEIDLDPGKDEDDLLLELSEMIDS.

3 consecutive C3H1-type zinc fingers follow at residues Pro-2–Ala-29, Ile-31–Ile-57, and Lys-60–Arg-86. Ser-108 carries the post-translational modification Phosphoserine. Residues Lys-114 and Lys-124 each participate in a glycyl lysine isopeptide (Lys-Gly) (interchain with G-Cter in SUMO2) cross-link. Ser-132 bears the Phosphoserine mark. Disordered regions lie at residues Met-139–Val-194, Lys-223–Arg-258, Gly-285–Asn-351, and Glu-367–Ile-432. Lys-140 participates in a covalent cross-link: Glycyl lysine isopeptide (Lys-Gly) (interchain with G-Cter in SUMO2). Residues Ser-149 and Ser-171 each carry the phosphoserine modification. Acidic residues predominate over residues Ala-160–Asp-175. Ser-290 is modified (phosphoserine). 2 stretches are compositionally biased toward basic and acidic residues: residues Lys-309–Pro-322 and Glu-367–Asp-390. Thr-321 carries the post-translational modification Phosphothreonine. Residues Glu-362 to Gln-423 are a coiled coil. Residue Ser-370 is modified to Phosphoserine. A compositionally biased stretch (polar residues) spans Ser-391–Arg-402. A compositionally biased stretch (basic and acidic residues) spans Gln-417–Ile-432. Lys-478 is covalently cross-linked (Glycyl lysine isopeptide (Lys-Gly) (interchain with G-Cter in SUMO2)). A disordered region spans residues Ala-482–Val-549. Residues Gln-486–Gln-498 are compositionally biased toward low complexity. Residue Lys-619 forms a Glycyl lysine isopeptide (Lys-Gly) (interchain with G-Cter in SUMO2) linkage. The tract at residues Thr-715–Ser-768 is disordered. Low complexity predominate over residues Pro-729–Ser-748. The segment covering Gln-749–Thr-762 has biased composition (polar residues).

Interacts with TREX complex components THOC2, DDX39 and POLDIP3; the interactions are ATP-dependent. Interacts with PABPN1; this interaction retains ZC3H11A in nuclear speckles. Interacts with KPNA3.

It localises to the nucleus. It is found in the nucleus speckle. In terms of biological role, through its association with TREX complex components, may participate in the export and post-transcriptional coordination of selected mRNA transcripts, including those required to maintain the metabolic processes in embryonic cells. Binds RNA. Functionally, (Microbial infection) Plays a role in efficient growth of several nuclear-replicating viruses such as HIV-1, influenza virus or herpes simplex virus 1/HHV-1. Required for efficient viral mRNA export. May be required for proper polyadenylation of adenovirus type 5/HAdV-5 capsid mRNA. The sequence is that of Zinc finger CCCH domain-containing protein 11A (ZC3H11A) from Homo sapiens (Human).